Here is a 119-residue protein sequence, read N- to C-terminus: Beta-2-microglobulin (119 aa).

Positions 1 to 20 (MARFVVVALLVQLSLFGLEA) are cleaved as a signal peptide. Positions 25–114 (PKIQVYSRYP…VTFSTPKTVK (90 aa)) constitute an Ig-like C1-type domain. Cys45 and Cys100 are joined by a disulfide.

Belongs to the beta-2-microglobulin family. Heterodimer of an alpha chain and a beta chain. Beta-2-microglobulin is the beta-chain of major histocompatibility complex class I molecules.

It localises to the secreted. Functionally, component of the class I major histocompatibility complex (MHC). Involved in the presentation of peptide antigens to the immune system. In Saguinus imperator (Emperor tamarin), this protein is Beta-2-microglobulin (B2M).